We begin with the raw amino-acid sequence, 141 residues long: Cystatin-SA (141 aa).

The signal sequence occupies residues 1–20; the sequence is MAWPLCTLLLLLATQAVALA. Residues 76–80 carry the Secondary area of contact motif; sequence QIVGG. Disulfide bonds link Cys94-Cys104 and Cys118-Cys138.

As to expression, expressed in submandibular and sublingual saliva but not in parotid saliva (at protein level). Expressed in submandibular gland and parotid gland.

The protein resides in the secreted. Functionally, thiol protease inhibitor. In Homo sapiens (Human), this protein is Cystatin-SA (CST2).